The primary structure comprises 201 residues: Recombination protein RecR (201 aa).

The C4-type zinc-finger motif lies at Cys60 to Cys75. Residues Thr83–Pro178 form the Toprim domain.

The protein belongs to the RecR family.

Its function is as follows. May play a role in DNA repair. It seems to be involved in an RecBC-independent recombinational process of DNA repair. It may act with RecF and RecO. The protein is Recombination protein RecR of Methylorubrum extorquens (strain CM4 / NCIMB 13688) (Methylobacterium extorquens).